A 355-amino-acid chain; its full sequence is tRNA N6-adenosine threonylcarbamoyltransferase (355 aa).

Fe cation-binding residues include histidine 113 and histidine 117. Residues 135–139, aspartate 168, glycine 181, and asparagine 279 each bind substrate; that span reads LASGG. Residue aspartate 307 coordinates Fe cation.

This sequence belongs to the KAE1 / TsaD family. It depends on Fe(2+) as a cofactor.

It is found in the cytoplasm. It carries out the reaction L-threonylcarbamoyladenylate + adenosine(37) in tRNA = N(6)-L-threonylcarbamoyladenosine(37) in tRNA + AMP + H(+). Required for the formation of a threonylcarbamoyl group on adenosine at position 37 (t(6)A37) in tRNAs that read codons beginning with adenine. Is involved in the transfer of the threonylcarbamoyl moiety of threonylcarbamoyl-AMP (TC-AMP) to the N6 group of A37, together with TsaE and TsaB. TsaD likely plays a direct catalytic role in this reaction. The polypeptide is tRNA N6-adenosine threonylcarbamoyltransferase (Bradyrhizobium sp. (strain BTAi1 / ATCC BAA-1182)).